A 293-amino-acid chain; its full sequence is Protease HtpX homolog (293 aa).

2 helical membrane passes run Ile4–Ile24 and Leu38–Leu58. His146 is a Zn(2+) binding site. Residue Glu147 is part of the active site. His150 is a Zn(2+) binding site. A run of 2 helical transmembrane segments spans residues Leu161–Val181 and Ala198–Phe218. Glu223 lines the Zn(2+) pocket.

Belongs to the peptidase M48B family. Zn(2+) is required as a cofactor.

The protein resides in the cell inner membrane. This chain is Protease HtpX homolog, found in Bordetella parapertussis (strain 12822 / ATCC BAA-587 / NCTC 13253).